The sequence spans 717 residues: Ribosomal RNA large subunit methyltransferase K/L (717 aa).

Residues 44–155 (DAYKVCIYSY…KQFVNVFLCL (112 aa)) form the THUMP domain.

This sequence belongs to the methyltransferase superfamily. RlmKL family.

Its subcellular location is the cytoplasm. The catalysed reaction is guanosine(2445) in 23S rRNA + S-adenosyl-L-methionine = N(2)-methylguanosine(2445) in 23S rRNA + S-adenosyl-L-homocysteine + H(+). It catalyses the reaction guanosine(2069) in 23S rRNA + S-adenosyl-L-methionine = N(2)-methylguanosine(2069) in 23S rRNA + S-adenosyl-L-homocysteine + H(+). Specifically methylates the guanine in position 2445 (m2G2445) and the guanine in position 2069 (m7G2069) of 23S rRNA. In Francisella tularensis subsp. tularensis (strain SCHU S4 / Schu 4), this protein is Ribosomal RNA large subunit methyltransferase K/L.